The following is a 228-amino-acid chain: L-ribulose-5-phosphate 4-epimerase UlaF (228 aa).

Substrate-binding positions include 26–27, 43–44, and 72–73; these read GN, SG, and SS. Zn(2+) is bound by residues Asp74, His93, and His95. The Proton donor/acceptor role is filled by Asp118. His167 contributes to the Zn(2+) binding site. Tyr225 acts as the Proton donor/acceptor in catalysis.

It belongs to the aldolase class II family. AraD/FucA subfamily. Zn(2+) is required as a cofactor.

The catalysed reaction is L-ribulose 5-phosphate = D-xylulose 5-phosphate. Its pathway is cofactor degradation; L-ascorbate degradation; D-xylulose 5-phosphate from L-ascorbate: step 4/4. Functionally, catalyzes the isomerization of L-ribulose 5-phosphate to D-xylulose 5-phosphate. Is involved in the anaerobic L-ascorbate utilization. The protein is L-ribulose-5-phosphate 4-epimerase UlaF of Escherichia coli (strain 55989 / EAEC).